Here is a 323-residue protein sequence, read N- to C-terminus: Aspartate carbamoyltransferase catalytic subunit (323 aa).

2 residues coordinate carbamoyl phosphate: arginine 55 and threonine 56. Lysine 83 serves as a coordination point for L-aspartate. Residues arginine 105, histidine 133, and glutamine 136 each contribute to the carbamoyl phosphate site. L-aspartate contacts are provided by arginine 166 and arginine 220. Residues glycine 261 and proline 262 each coordinate carbamoyl phosphate.

It belongs to the aspartate/ornithine carbamoyltransferase superfamily. ATCase family. Heterododecamer (2C3:3R2) of six catalytic PyrB chains organized as two trimers (C3), and six regulatory PyrI chains organized as three dimers (R2).

It catalyses the reaction carbamoyl phosphate + L-aspartate = N-carbamoyl-L-aspartate + phosphate + H(+). The protein operates within pyrimidine metabolism; UMP biosynthesis via de novo pathway; (S)-dihydroorotate from bicarbonate: step 2/3. Its function is as follows. Catalyzes the condensation of carbamoyl phosphate and aspartate to form carbamoyl aspartate and inorganic phosphate, the committed step in the de novo pyrimidine nucleotide biosynthesis pathway. This Acidothermus cellulolyticus (strain ATCC 43068 / DSM 8971 / 11B) protein is Aspartate carbamoyltransferase catalytic subunit.